We begin with the raw amino-acid sequence, 3065 residues long: MAX gene-associated protein (3065 aa).

Residues K4 and K178 each participate in a glycyl lysine isopeptide (Lys-Gly) (interchain with G-Cter in SUMO2) cross-link. The segment at residues 84–260 (MWNEFYHRST…YNPFAKGFRD (177 aa)) is a DNA-binding region (T-box). Basic and acidic residues predominate over residues 259-277 (RDDGLNNKPQRDGKQKNSS). The interval 259 to 322 (RDDGLNNKPQ…GHETSGKGLE (64 aa)) is disordered. The span at 278 to 289 (DQEGNNISSSSG) shows a compositional bias: polar residues. A compositionally biased stretch (basic and acidic residues) spans 309–322 (PLSRGHETSGKGLE). Glycyl lysine isopeptide (Lys-Gly) (interchain with G-Cter in SUMO2) cross-links involve residues K323, K329, K349, K432, K460, K465, and K482. The residue at position 534 (S534) is a Phosphoserine. Residue K570 forms a Glycyl lysine isopeptide (Lys-Gly) (interchain with G-Cter in SUMO2) linkage. A disordered region spans residues 604–653 (QNASPNVPGKRGRPRKLKLCKAGRPPKNTGKSLISTKNTPVSPGSTFPDV). S607 is modified (phosphoserine). A Glycyl lysine isopeptide (Lys-Gly) (interchain with G-Cter in SUMO2) cross-link involves residue K613. The span at 613–624 (KRGRPRKLKLCK) shows a compositional bias: basic residues. Residues 632-648 (TGKSLISTKNTPVSPGS) show a composition bias toward polar residues. S645 carries the post-translational modification Phosphoserine. Residues K654, K785, K791, K817, and K826 each participate in a glycyl lysine isopeptide (Lys-Gly) (interchain with G-Cter in SUMO2) cross-link. S851 is subject to Phosphoserine. The segment at 881 to 911 (STSYSLKPHSVPPVSRKAKSQNRQATFSGRT) is disordered. Residues 901–911 (QNRQATFSGRT) show a composition bias toward polar residues. Residue S924 is modified to Phosphoserine. Residue K928 forms a Glycyl lysine isopeptide (Lys-Gly) (interchain with G-Cter in SUMO2) linkage. Residues 971 to 990 (RQAQQQQQQQQGSRPPGLSK) form a disordered region. A compositionally biased stretch (low complexity) spans 972-981 (QAQQQQQQQQ). Residues K990, K1091, K1140, K1162, K1199, and K1207 each participate in a glycyl lysine isopeptide (Lys-Gly) (interchain with G-Cter in SUMO2) cross-link. Residues 1111–1147 (YDTLGEEAREEEEGIREEEEQLKEKKKRKKLEYTICE) are a coiled coil. S1208 is subject to Phosphoserine. Disordered stretches follow at residues 1246–1332 (RKKE…PGGP) and 1380–1429 (RKSR…MEDI). Composition is skewed to low complexity over residues 1253-1269 (QPSS…QQTS) and 1310-1322 (KSSC…SSTS). S1430 and S1457 each carry phosphoserine. Residues K1461 and K1502 each participate in a glycyl lysine isopeptide (Lys-Gly) (interchain with G-Cter in SUMO2) cross-link. Disordered regions lie at residues 1488–1517 (SRKP…PGKN), 1905–1927 (SPPE…YSSG), and 1967–2029 (QMKR…EDRG). Composition is skewed to polar residues over residues 1495 to 1514 (LPST…TNRP) and 1911 to 1927 (SFAS…YSSG). Residues 1968–1994 (MKRESQNPDQKDETNSIKREQETKKVL) are compositionally biased toward basic and acidic residues. Glycyl lysine isopeptide (Lys-Gly) (interchain with G-Cter in SUMO2) cross-links involve residues K1985 and K1992. Residues 2008 to 2023 (IKQNSGAATSEETLND) show a composition bias toward polar residues. Residues K2103, K2113, K2135, K2139, K2146, K2159, K2194, K2206, and K2238 each participate in a glycyl lysine isopeptide (Lys-Gly) (interchain with G-Cter in SUMO2) cross-link. The segment at 2258-2316 (RRAAKSSRGNGHFQGHLLLPGEQIQPKQEKKGGRSSADFTVLDLEEDDEDDNEKTDDSI) is disordered. R2265 carries the omega-N-methylarginine modification. Residue K2284 forms a Glycyl lysine isopeptide (Lys-Gly) (interchain with G-Cter in SUMO2) linkage. The segment covering 2300–2316 (DLEEDDEDDNEKTDDSI) has biased composition (acidic residues). Glycyl lysine isopeptide (Lys-Gly) (interchain with G-Cter in SUMO2) cross-links involve residues K2378, K2413, K2457, and K2532. The 52-residue stretch at 2423–2474 (YYRRTHTANERRRRGEMRDLFEKLKITLGLLHSSKVSKSLILTRAFSEIQGL) folds into the bHLH domain. Position 2541 is a phosphoserine (S2541). K2546 is covalently cross-linked (Glycyl lysine isopeptide (Lys-Gly) (interchain with G-Cter in SUMO2)). Residues 2576 to 2595 (KKDQATENTSPLNTPHTSAN) are disordered. The span at 2581–2595 (TENTSPLNTPHTSAN) shows a compositional bias: polar residues. Residues K2629, K2679, K2698, and K2784 each participate in a glycyl lysine isopeptide (Lys-Gly) (interchain with G-Cter in SUMO2) cross-link. Positions 2668–2709 (GSKYPHEVPDSKPSDHLKDTVRNEDNSLEDKGRISSRGNRDG) are disordered. A compositionally biased stretch (basic and acidic residues) spans 2671–2709 (YPHEVPDSKPSDHLKDTVRNEDNSLEDKGRISSRGNRDG). Residues 2817–2841 (DDTDETLTSLLNEIAFLNQQLNDDS) adopt a coiled-coil conformation. S2910 and S2921 each carry phosphoserine. Residues 2944-2968 (AIDGGKNTSGLPAEPESVSSPPTLH) are disordered. At S2978 the chain carries Phosphoserine. K3041 participates in a covalent cross-link: Glycyl lysine isopeptide (Lys-Gly) (interchain with G-Cter in SUMO2).

Interacts with MAX. Requires dimerization with MAX for E-box binding. Component of some MLL1/MLL complex, at least composed of the core components KMT2A/MLL1, ASH2L, HCFC1/HCF1, WDR5 and RBBP5, as well as the facultative components BACC1, CHD8, E2F6, HSP70, INO80C, KANSL1, LAS1L, MAX, MCRS1, MGA, MYST1/MOF, PELP1, PHF20, PRP31, RING2, RUVB1/TIP49A, RUVB2/TIP49B, SENP3, TAF1, TAF4, TAF6, TAF7, TAF9 and TEX10. Interacts with ZMYND11. In terms of tissue distribution, highly expressed in germ cells and granulosa cells.

It localises to the nucleus. Its function is as follows. Functions as a dual-specificity transcription factor, regulating the expression of both MAX-network and T-box family target genes. Functions as a repressor or an activator. Binds to 5'-AATTTCACACCTAGGTGTGAAATT-3' core sequence and seems to regulate MYC-MAX target genes. Suppresses transcriptional activation by MYC and inhibits MYC-dependent cell transformation. Function activated by heterodimerization with MAX. This heterodimerization serves the dual function of both generating an E-box-binding heterodimer and simultaneously blocking interaction of a corepressor. The protein is MAX gene-associated protein of Homo sapiens (Human).